Reading from the N-terminus, the 146-residue chain is NADH-ubiquinone oxidoreductase chain 6 (146 aa).

4 consecutive transmembrane segments (helical) span residues 10–30 (ILAI…LLFV), 43–63 (LMGI…FLFI), 81–101 (VIVL…PIAI), and 124–144 (APML…AIAM).

This sequence belongs to the complex I subunit 6 family.

The protein resides in the mitochondrion membrane. It carries out the reaction a ubiquinone + NADH + 5 H(+)(in) = a ubiquinol + NAD(+) + 4 H(+)(out). Functionally, core subunit of the mitochondrial membrane respiratory chain NADH dehydrogenase (Complex I) that is believed to belong to the minimal assembly required for catalysis. Complex I functions in the transfer of electrons from NADH to the respiratory chain. The immediate electron acceptor for the enzyme is believed to be ubiquinone. The sequence is that of NADH-ubiquinone oxidoreductase chain 6 (NAD6) from Candida albicans (strain SC5314 / ATCC MYA-2876) (Yeast).